Here is a 261-residue protein sequence, read N- to C-terminus: Ribonuclease HII (261 aa).

The RNase H type-2 domain maps to 71–259 (KYIAGVDEVG…VKEAKLHFDS (189 aa)). A divalent metal cation contacts are provided by Asp77, Glu78, and Asp169.

This sequence belongs to the RNase HII family. It depends on Mn(2+) as a cofactor. Mg(2+) serves as cofactor.

The protein resides in the cytoplasm. The catalysed reaction is Endonucleolytic cleavage to 5'-phosphomonoester.. Endonuclease that specifically degrades the RNA of RNA-DNA hybrids. The sequence is that of Ribonuclease HII from Listeria monocytogenes serotype 4b (strain F2365).